The following is a 317-amino-acid chain: Terpene synthase 3 (317 aa).

The DDxx(x)D/E motif motif lies at 96-101 (DDFYFE). An NDxxSxxxD/E motif motif is present at residues 223-231 (NDMVSFERE).

The protein belongs to the terpene synthase family.

Its function is as follows. Terpene synthase that converts its substrate farnesyl diphosphate (FPP) into the sesquiterpene CAS 137235-51-9 as a major product. Is also able to convert FPP into 9-epi-(E)-caryophyllene, alpha-neoclovene, beta-neoclovene, and 3 yet unidentified sesquiterpenes. This is Terpene synthase 3 from Dictyostelium purpureum (Slime mold).